Consider the following 402-residue polypeptide: B3 domain-containing protein Os01g0723500 (402 aa).

Residues 18–121 constitute a DNA-binding region (TF-B3 1); the sequence is RPHFFKVLVG…RFTAMVFDRT (104 aa). The tract at residues 126-203 is disordered; the sequence is EDLMGGGGGD…VKNEEDADEL (78 aa). Residues 152–162 show a composition bias toward basic and acidic residues; the sequence is DAARPKKDSVG. Over residues 173–186 the composition is skewed to polar residues; sequence SGGQPLQIVDSSWT. The TF-B3 2 DNA-binding region spans 289 to 381; the sequence is CVIRMSTMHV…EFRVHIFRVV (93 aa).

The protein localises to the nucleus. The sequence is that of B3 domain-containing protein Os01g0723500 from Oryza sativa subsp. japonica (Rice).